The sequence spans 208 residues: Large ribosomal subunit protein bL25 (208 aa).

It belongs to the bacterial ribosomal protein bL25 family. CTC subfamily. Part of the 50S ribosomal subunit; part of the 5S rRNA/L5/L18/L25 subcomplex. Contacts the 5S rRNA. Binds to the 5S rRNA independently of L5 and L18.

Functionally, this is one of the proteins that binds to the 5S RNA in the ribosome where it forms part of the central protuberance. The sequence is that of Large ribosomal subunit protein bL25 from Acidovorax ebreus (strain TPSY) (Diaphorobacter sp. (strain TPSY)).